We begin with the raw amino-acid sequence, 620 residues long: Lamin-B2 (620 aa).

Residues 1–38 form a disordered region; the sequence is MSPPSPGRRREQRRPRAAATMATPLPGRAGGPATPLSP. Positions 1-48 are head; that stretch reads MSPPSPGRRREQRRPRAAATMATPLPGRAGGPATPLSPTRLSRLQEKE. A phosphothreonine mark is found at threonine 23 and threonine 34. At serine 37 the chain carries Phosphoserine. In terms of domain architecture, IF rod spans 46–402; that stretch reads EKEELRELND…KLLEGEEERL (357 aa). Residues 49–83 are coil 1A; sequence ELRELNDRLAHYIDRVRALELENDRLLLKISEKEE. A Glycyl lysine isopeptide (Lys-Gly) (interchain with G-Cter in SUMO2) cross-link involves residue lysine 77. Lysine 81 carries the N6-acetyllysine; alternate modification. A Glycyl lysine isopeptide (Lys-Gly) (interchain with G-Cter in SUMO2); alternate cross-link involves residue lysine 81. Residues 84 to 95 are linker 1; it reads VTTREVSGIKAL. The interval 96 to 229 is coil 1B; that stretch reads YESELADARR…DFRKSVFEEE (134 aa). Residues lysine 195 and lysine 255 each participate in a glycyl lysine isopeptide (Lys-Gly) (interchain with G-Cter in SUMO2) cross-link. The linker 2 stretch occupies residues 230–256; that stretch reads VRETRRRHERRLVEVDSSRQQEYDFKM. Positions 257–400 are coil 2; sequence AQALEELRSQ…YRKLLEGEEE (144 aa). Serine 316 and serine 407 each carry phosphoserine. The segment at 399–464 is disordered; the sequence is EERLKLSPSP…GTGGSGGFHL (66 aa). Residues 401–620 form a tail region; sequence RLKLSPSPSS…RTTSRGCYVM (220 aa). Low complexity predominate over residues 404 to 431; that stretch reads LSPSPSSRVTVSRATSSSSGSLSATGRL. Residue threonine 413 is glycosylated (O-linked (GlcNAc) threonine). 4 positions are modified to phosphoserine: serine 420, serine 422, serine 424, and serine 426. Arginine 433 carries the omega-N-methylarginine modification. The Nuclear localization signal motif lies at 435-440; that stretch reads KRKRLE. A compositionally biased stretch (low complexity) spans 444–453; sequence PLGSGPSVLG. The LTD domain occupies 462 to 579; the sequence is FHLAQQASAS…EEVAMRTVKK (118 aa). Lysine 489 participates in a covalent cross-link: Glycyl lysine isopeptide (Lys-Gly) (interchain with G-Cter in SUMO2). Residue serine 497 is modified to Phosphoserine. Residues 581–620 are disordered; sequence SVMRENENGEEEEEEAEFGEEDLFHQQGDPRTTSRGCYVM. Over residues 588–601 the composition is skewed to acidic residues; the sequence is NGEEEEEEAEFGEE. The span at 609-620 shows a compositional bias: polar residues; the sequence is DPRTTSRGCYVM. Residue cysteine 617 is modified to Cysteine methyl ester. A lipid anchor (S-farnesyl cysteine) is attached at cysteine 617. A propeptide spans 618-620 (removed in mature form); sequence YVM.

The protein belongs to the intermediate filament family. As to quaternary structure, dimer. Lamin dimers then assemble into dimeric head-to-tail polymers. Ultimately, two head-to-tail polymers assemble laterally into a protofilament with a uniformly shaped rod of 3.5 nm in diameter. Interacts with TMEM43. B-type lamins undergo a series of modifications, such as farnesylation and phosphorylation. Increased phosphorylation of the lamins occurs before envelope disintegration and probably plays a role in regulating lamin associations. In terms of processing, phosphorylation plays a key role in lamin organization, subcellular localization and nuclear envelope disintegration. Phosphorylation by CDK1 at Ser-37 and Ser-407 at the onset of mitosis drives lamin disassembly and nuclear envelope breakdown.

It localises to the nucleus lamina. Lamins are intermediate filament proteins that assemble into a filamentous meshwork, and which constitute the major components of the nuclear lamina, a fibrous layer on the nucleoplasmic side of the inner nuclear membrane. Lamins provide a framework for the nuclear envelope, bridging the nuclear envelope and chromatin, thereby playing an important role in nuclear assembly, chromatin organization, nuclear membrane and telomere dynamics. The structural integrity of the lamina is strictly controlled by the cell cycle, as seen by the disintegration and formation of the nuclear envelope in prophase and telophase, respectively. The protein is Lamin-B2 (LMNB2) of Homo sapiens (Human).